We begin with the raw amino-acid sequence, 954 residues long: E3 ubiquitin-protein ligase MIB2 (954 aa).

Residues 1-80 (MDLDPYASMQ…AYDLLLYDNA (80 aa)) form the MIB/HERC2 1 domain. The segment at 86–138 (HPNIICDCCKKHGIRGMRWKCKMCFDYDLCTQCYMNNKHDLSHAFERYETAHS) adopts a ZZ-type zinc-finger fold. Zn(2+) is bound by residues cysteine 91, cysteine 94, cysteine 106, cysteine 109, cysteine 115, cysteine 118, histidine 124, and histidine 128. Residues 149-227 (LTRITLKGTF…KVDLKCTVEA (79 aa)) form the MIB/HERC2 2 domain. ANK repeat units lie at residues 464 to 493 (QGRTALQIASYQGHLDVVKILLQAHATVNL), 497 to 526 (EGDTALHYAAFGNQADVARVLMAKGAGADL), 530 to 559 (AKCTALYVAVSQGFTEVVQALCELNCDVNL), 563 to 591 (HGDTPLHYAITADYKVIIEILTEVPNIDF), 597 to 626 (QGFNLLHYSALKGNKLAIKKILARARQLVD), 631 to 661 (DGFTALHLAALNNHKEVAEILIKEGRCDVNV), 665 to 694 (RNQTPLHLAIIQGHVGLVQLLVSEGSDVNA), 698 to 726 (DGDTAMHIALERQQLMSVLMEKREGEMGS), and 766 to 795 (RGKSPLDLITDGRIVQIIKDFSQKFREQQV). 2 RING-type zinc fingers span residues 830 to 865 (CLVCSELALLIHFFPCQHSIVCEECSRRMKKCIKCQ) and 910 to 943 (CPICIDDQIKLVFQCGHGSCPDCSTALTVCPICR).

Its subcellular location is the cytoplasm. It carries out the reaction S-ubiquitinyl-[E2 ubiquitin-conjugating enzyme]-L-cysteine + [acceptor protein]-L-lysine = [E2 ubiquitin-conjugating enzyme]-L-cysteine + N(6)-ubiquitinyl-[acceptor protein]-L-lysine.. It participates in protein modification; protein ubiquitination. In terms of biological role, E3 ubiquitin-protein ligase that mediates ubiquitination of Delta receptors, which act as ligands of Notch proteins. Positively regulates the Delta-mediated Notch signaling by ubiquitinating the intracellular domain of Delta, leading to endocytosis of Delta receptors. The polypeptide is E3 ubiquitin-protein ligase MIB2 (MIB2) (Gallus gallus (Chicken)).